The primary structure comprises 844 residues: Rho guanine nucleotide exchange factor 33 (844 aa).

Basic and acidic residues-rich tracts occupy residues 1 to 13 (MEKTKTKQGENEH) and 101 to 113 (QQKIEQLQQEKRR). 3 disordered regions span residues 1–20 (MEKTKTKQGENEHMPVNNPS), 101–142 (QQKI…GSPF), and 169–189 (AQESRSVHVGDSNVKGMMGPG). Residues 54–129 (LEEKVKSCRC…AKKTQKEEHS (76 aa)) adopt a coiled-coil conformation. Polar residues predominate over residues 130-142 (SQAGPAQAQGSPF). A DH domain is found at 265-440 (KRQTVALELL…RVFISHYTLL (176 aa)). Disordered regions lie at residues 498–541 (LQPY…DWEL), 668–687 (RPEHPLQPLPKSATSPAGSS), and 702–745 (AKPL…RAAQ). An Omega-N-methylarginine modification is found at R757. Positions 787–800 (DTTRFCPKEERESE) are enriched in basic and acidic residues. The interval 787-844 (DTTRFCPKEERESEQTSFSDQNPRQDQKGGFRSSFRKLFKKKNGNATGEDFCGPWGWW) is disordered. Residues 820-829 (SFRKLFKKKN) show a composition bias toward basic residues.

Its function is as follows. May act as a guanine-nucleotide releasing factor. In Homo sapiens (Human), this protein is Rho guanine nucleotide exchange factor 33 (ARHGEF33).